The primary structure comprises 165 residues: Nucleotide-binding protein Syncc9902_1708 (165 aa).

The protein belongs to the YajQ family.

Functionally, nucleotide-binding protein. This is Nucleotide-binding protein Syncc9902_1708 from Synechococcus sp. (strain CC9902).